Reading from the N-terminus, the 125-residue chain is C-X-C motif chemokine 9 (125 aa).

The first 21 residues, 1-21 (MKKSAPLFLGIIFLTLTGVQG), serve as a signal peptide directing secretion. 2 cysteine pairs are disulfide-bonded: cysteine 30–cysteine 57 and cysteine 32–cysteine 73. Residues 91 to 125 (QVNQKKKQRKGKKYKKTKKVPKVKRSQRPSQKKTT) are disordered. Positions 93-125 (NQKKKQRKGKKYKKTKKVPKVKRSQRPSQKKTT) are enriched in basic residues.

The protein belongs to the intercrine alpha (chemokine CxC) family.

The protein resides in the secreted. Its function is as follows. Cytokine that affects the growth, movement, or activation state of cells that participate in immune and inflammatory response. Chemotactic for activated T-cells. Binds to CXCR3. This is C-X-C motif chemokine 9 (CXCL9) from Bos taurus (Bovine).